A 116-amino-acid polypeptide reads, in one-letter code: Phosphoribosyl-AMP cyclohydrolase (116 aa).

Asp85 contacts Mg(2+). Residue Cys86 participates in Zn(2+) binding. 2 residues coordinate Mg(2+): Asp87 and Asp89. Residues Cys102 and Cys109 each contribute to the Zn(2+) site.

The protein belongs to the PRA-CH family. In terms of assembly, homodimer. It depends on Mg(2+) as a cofactor. Requires Zn(2+) as cofactor.

The protein resides in the cytoplasm. The enzyme catalyses 1-(5-phospho-beta-D-ribosyl)-5'-AMP + H2O = 1-(5-phospho-beta-D-ribosyl)-5-[(5-phospho-beta-D-ribosylamino)methylideneamino]imidazole-4-carboxamide. It participates in amino-acid biosynthesis; L-histidine biosynthesis; L-histidine from 5-phospho-alpha-D-ribose 1-diphosphate: step 3/9. In terms of biological role, catalyzes the hydrolysis of the adenine ring of phosphoribosyl-AMP. This Corynebacterium diphtheriae (strain ATCC 700971 / NCTC 13129 / Biotype gravis) protein is Phosphoribosyl-AMP cyclohydrolase.